The sequence spans 369 residues: Aminomethyltransferase (369 aa).

The protein belongs to the GcvT family. In terms of assembly, the glycine cleavage system is composed of four proteins: P, T, L and H.

The catalysed reaction is N(6)-[(R)-S(8)-aminomethyldihydrolipoyl]-L-lysyl-[protein] + (6S)-5,6,7,8-tetrahydrofolate = N(6)-[(R)-dihydrolipoyl]-L-lysyl-[protein] + (6R)-5,10-methylene-5,6,7,8-tetrahydrofolate + NH4(+). The glycine cleavage system catalyzes the degradation of glycine. The chain is Aminomethyltransferase from Xanthomonas axonopodis pv. citri (strain 306).